Consider the following 607-residue polypeptide: Chaperone protein DnaK (607 aa).

T173 carries the phosphothreonine; by autocatalysis modification. Low complexity predominate over residues 577-588 (AQAQQGAEGAAS). The interval 577–607 (AQAQQGAEGAASQDDDVVDADFTEVKDDDNK) is disordered. A compositionally biased stretch (acidic residues) spans 589 to 598 (QDDDVVDADF).

The protein belongs to the heat shock protein 70 family.

Functionally, acts as a chaperone. This Macrococcus caseolyticus (strain JCSC5402) (Macrococcoides caseolyticum) protein is Chaperone protein DnaK.